The chain runs to 1132 residues: Ubiquitin-associated protein 2 (1132 aa).

The segment at 1–29 (MMTSVSNDRCRGAREKPQMPTAHAAQSQK) is disordered. Over residues 8-17 (DRCRGAREKP) the composition is skewed to basic and acidic residues. Residues 48-92 (KNDSDFEAKVKQLMEVTGKNQDECIVALHDCNGDVNKAINILLEG) form the UBA domain. Disordered stretches follow at residues 95–202 (DTTS…YSES), 221–248 (GTDEGPEGLAKSHSMSQEPPSKSSYGLK), 331–351 (NNQMAPGTANSTSASSYSPQS), 380–479 (LKPP…STVS), 602–679 (TSSA…VSTL), 713–749 (PLSQLSSSLSGHQNSMTSAHATRSTSTPHTHASVEST), 875–919 (PYSG…LNPG), 996–1033 (GGYGGSSQAPNKSTGSGPGKGVSVSSGTGLPDMTGSVY), 1040–1059 (DKQGFHAGTPPPFSLPSALG), and 1087–1132 (PHSQ…YWTN). Positions 109–130 (FGRESSENKENREKRTEREASR) are enriched in basic and acidic residues. Omega-N-methylarginine is present on Arg166. The segment covering 168-182 (KRARGRGFGRGRGRG) has biased composition (basic residues). Composition is skewed to polar residues over residues 233 to 244 (HSMSQEPPSKSS) and 331 to 340 (NNQMAPGTAN). The segment covering 341–351 (STSASSYSPQS) has biased composition (low complexity). Residues 392–404 (SSAQQNDTASPPA) show a composition bias toward polar residues. A phosphoserine mark is found at Ser433 and Ser440. 2 stretches are compositionally biased toward low complexity: residues 436-448 (LSQLSQRQQHQTQ) and 602-618 (TSSALSSTSPVTTSSSY). Residues 619–630 (DQSSVHTRIAYQ) are compositionally biased toward polar residues. Ser631 carries the phosphoserine modification. Over residues 631 to 644 (SSASPPDSAPGSVA) the composition is skewed to low complexity. Positions 652-662 (SQHTVDTTSSV) are enriched in polar residues. The segment covering 713–722 (PLSQLSSSLS) has biased composition (low complexity). Over residues 723-742 (GHQNSMTSAHATRSTSTPHT) the composition is skewed to polar residues. Over residues 897 to 914 (PAQAQQSQSQTHHTAQQP) the composition is skewed to low complexity. The span at 1101-1115 (PSGSGQRSQPSSLQP) shows a compositional bias: low complexity. Positions 1116–1132 (KSQASKPTYGSAPYWTN) are enriched in polar residues.

As to quaternary structure, may interact with ANXA2.

It localises to the nucleus. The protein localises to the chromosome. Its subcellular location is the cytoplasm. Functionally, recruits the ubiquitination machinery to RNA polymerase II for polyubiquitination, removal and degradation, when the transcription-coupled nucleotide excision repair (TC-NER) machinery fails to resolve DNA damage. May promote the degradation of ANXA2. This Mus musculus (Mouse) protein is Ubiquitin-associated protein 2.